The primary structure comprises 311 residues: Cbb3-type cytochrome c oxidase subunit CcoP1 (311 aa).

2 helical membrane-spanning segments follow: residues Phe-4 to Ile-24 and Arg-56 to Tyr-76. 2 consecutive Cytochrome c domains span residues Gln-130–Leu-209 and Ala-220–Ser-302. Heme c-binding residues include Cys-143, Cys-146, His-147, Met-186, Cys-233, Cys-236, His-237, and Met-279.

It belongs to the CcoP / FixP family. In terms of assembly, component of the cbb3-type cytochrome c oxidase at least composed of CcoN, CcoO, CcoQ and CcoP. The cofactor is heme c.

The protein resides in the cell inner membrane. It functions in the pathway energy metabolism; oxidative phosphorylation. C-type cytochrome. Part of the cbb3-type cytochrome c oxidase complex. CcoP subunit is required for transferring electrons from donor cytochrome c via its heme groups to CcoO subunit. From there, electrons are shuttled to the catalytic binuclear center of CcoN subunit where oxygen reduction takes place. The complex also functions as a proton pump. In Stutzerimonas stutzeri (Pseudomonas stutzeri), this protein is Cbb3-type cytochrome c oxidase subunit CcoP1.